The chain runs to 559 residues: Poly(3-hydroxyalkanoate) polymerase 1 (559 aa).

The active site involves C296.

This sequence belongs to the PHA/PHB synthase family. Type II PhaC subfamily.

It participates in biopolymer metabolism; poly-(R)-3-hydroxybutanoate biosynthesis. Its function is as follows. Synthesizes poly(3-hydroxyalkanoates) (PHA), complements a mutant of P.putida that does not make PHA. This Ectopseudomonas oleovorans (Pseudomonas oleovorans) protein is Poly(3-hydroxyalkanoate) polymerase 1.